The sequence spans 120 residues: Large ribosomal subunit protein bL17 (120 aa).

Belongs to the bacterial ribosomal protein bL17 family. In terms of assembly, part of the 50S ribosomal subunit. Contacts protein L32.

In Geobacillus thermodenitrificans (strain NG80-2), this protein is Large ribosomal subunit protein bL17.